A 118-amino-acid chain; its full sequence is Small ribosomal subunit protein uS13 (118 aa).

A disordered region spans residues 96-118 (PLRGQRTRTNARTRKGPRKAIKK).

It belongs to the universal ribosomal protein uS13 family. As to quaternary structure, part of the 30S ribosomal subunit. Forms a loose heterodimer with protein S19. Forms two bridges to the 50S subunit in the 70S ribosome.

Located at the top of the head of the 30S subunit, it contacts several helices of the 16S rRNA. In the 70S ribosome it contacts the 23S rRNA (bridge B1a) and protein L5 of the 50S subunit (bridge B1b), connecting the 2 subunits; these bridges are implicated in subunit movement. Contacts the tRNAs in the A and P-sites. In Stenotrophomonas maltophilia (strain K279a), this protein is Small ribosomal subunit protein uS13.